The sequence spans 395 residues: Nicotinate phosphoribosyltransferase (395 aa).

His-222 carries the post-translational modification Phosphohistidine; by autocatalysis.

The protein belongs to the NAPRTase family. Transiently phosphorylated on a His residue during the reaction cycle. Phosphorylation strongly increases the affinity for substrates and increases the rate of nicotinate D-ribonucleotide production. Dephosphorylation regenerates the low-affinity form of the enzyme, leading to product release.

The enzyme catalyses nicotinate + 5-phospho-alpha-D-ribose 1-diphosphate + ATP + H2O = nicotinate beta-D-ribonucleotide + ADP + phosphate + diphosphate. It functions in the pathway cofactor biosynthesis; NAD(+) biosynthesis; nicotinate D-ribonucleotide from nicotinate: step 1/1. Its function is as follows. Catalyzes the synthesis of beta-nicotinate D-ribonucleotide from nicotinate and 5-phospho-D-ribose 1-phosphate at the expense of ATP. The polypeptide is Nicotinate phosphoribosyltransferase (Polaromonas sp. (strain JS666 / ATCC BAA-500)).